The chain runs to 374 residues: Beta sliding clamp (374 aa).

The protein belongs to the beta sliding clamp family. In terms of assembly, forms a ring-shaped head-to-tail homodimer around DNA which binds and tethers DNA polymerases and other proteins to the DNA. The DNA replisome complex has a single clamp-loading complex (3 tau and 1 each of delta, delta', psi and chi subunits) which binds 3 Pol III cores (1 core on the leading strand and 2 on the lagging strand) each with a beta sliding clamp dimer. Additional proteins in the replisome are other copies of gamma, psi and chi, Ssb, DNA helicase and RNA primase.

Its subcellular location is the cytoplasm. Confers DNA tethering and processivity to DNA polymerases and other proteins. Acts as a clamp, forming a ring around DNA (a reaction catalyzed by the clamp-loading complex) which diffuses in an ATP-independent manner freely and bidirectionally along dsDNA. Initially characterized for its ability to contact the catalytic subunit of DNA polymerase III (Pol III), a complex, multichain enzyme responsible for most of the replicative synthesis in bacteria; Pol III exhibits 3'-5' exonuclease proofreading activity. The beta chain is required for initiation of replication as well as for processivity of DNA replication. The polypeptide is Beta sliding clamp (dnaN) (Helicobacter pylori (strain J99 / ATCC 700824) (Campylobacter pylori J99)).